The following is an 859-amino-acid chain: Auxin response factor 2 (859 aa).

The disordered stretch occupies residues Met1–Ala48. Low complexity predominate over residues Gly14–Ser23. The TF-B3 DNA-binding region spans Phe164–Met266. Residues Leu396–Pro407 are compositionally biased toward pro residues. Disordered regions lie at residues Leu396–Ser442, Ile687–Thr736, and Arg829–Ser859. 2 stretches are compositionally biased toward polar residues: residues Ile416–Leu426 and Leu695–Ser704. The 85-residue stretch at Arg733–Glu817 folds into the PB1 domain. Residues Ser847–Ser859 are compositionally biased toward polar residues.

It belongs to the ARF family. Homodimers and heterodimers. Interacts with ARF1. As to expression, expressed in the whole plant.

The protein localises to the nucleus. In terms of biological role, auxin response factors (ARFs) are transcriptional factors that bind specifically to the DNA sequence 5'-TGTCTC-3' found in the auxin-responsive promoter elements (AuxREs). Could act as transcriptional activator or repressor. Formation of heterodimers with Aux/IAA proteins may alter their ability to modulate early auxin response genes expression. Promotes flowering, stamen development, floral organ abscission and fruit dehiscence. Functions independently of ethylene and cytokinin response pathways. May act as a repressor of cell division and organ growth. The polypeptide is Auxin response factor 2 (ARF2) (Arabidopsis thaliana (Mouse-ear cress)).